Consider the following 117-residue polypeptide: Immunoglobulin kappa variable 1-5 (117 aa).

A signal peptide spans 1–22; sequence MDMRVPAQLLGLLLLWLPGAKC. The interval 23 to 45 is framework-1; that stretch reads DIQMTQSPSTLSASVGDRVTITC. Residues 24–117 enclose the Ig-like domain; that stretch reads IQMTQSPSTL…YYCQQYNSYS (94 aa). Residues Cys-45 and Cys-110 are joined by a disulfide bond. The complementarity-determining-1 stretch occupies residues 46–56; it reads RASQSISSWLA. The interval 57-71 is framework-2; the sequence is WYQQKPGKAPKLLIY. Residues 72–78 form a complementarity-determining-2 region; that stretch reads KASSLES. A framework-3 region spans residues 79-110; sequence GVPSRFSGSGSGTEFTLTISSLQPDDFATYYC. The tract at residues 111 to 117 is complementarity-determining-3; sequence QQYNSYS.

Immunoglobulins are composed of two identical heavy chains and two identical light chains; disulfide-linked.

It is found in the secreted. Its subcellular location is the cell membrane. Its function is as follows. V region of the variable domain of immunoglobulin light chains that participates in the antigen recognition. Immunoglobulins, also known as antibodies, are membrane-bound or secreted glycoproteins produced by B lymphocytes. In the recognition phase of humoral immunity, the membrane-bound immunoglobulins serve as receptors which, upon binding of a specific antigen, trigger the clonal expansion and differentiation of B lymphocytes into immunoglobulins-secreting plasma cells. Secreted immunoglobulins mediate the effector phase of humoral immunity, which results in the elimination of bound antigens. The antigen binding site is formed by the variable domain of one heavy chain, together with that of its associated light chain. Thus, each immunoglobulin has two antigen binding sites with remarkable affinity for a particular antigen. The variable domains are assembled by a process called V-(D)-J rearrangement and can then be subjected to somatic hypermutations which, after exposure to antigen and selection, allow affinity maturation for a particular antigen. This is Immunoglobulin kappa variable 1-5 from Homo sapiens (Human).